A 384-amino-acid chain; its full sequence is Spermidine/putrescine import ATP-binding protein PotA (384 aa).

Positions 6–238 constitute an ABC transporter domain; sequence IAFKNVSKVF…PINHFVATFI (233 aa). 40 to 47 provides a ligand contact to ATP; that stretch reads GASGSGKS.

The protein belongs to the ABC transporter superfamily. Spermidine/putrescine importer (TC 3.A.1.11.1) family. As to quaternary structure, the complex is composed of two ATP-binding proteins (PotA), two transmembrane proteins (PotB and PotC) and a solute-binding protein (PotD).

The protein localises to the cell membrane. The enzyme catalyses ATP + H2O + polyamine-[polyamine-binding protein]Side 1 = ADP + phosphate + polyamineSide 2 + [polyamine-binding protein]Side 1.. Functionally, part of the ABC transporter complex PotABCD involved in spermidine/putrescine import. Responsible for energy coupling to the transport system. The sequence is that of Spermidine/putrescine import ATP-binding protein PotA from Streptococcus agalactiae serotype Ia (strain ATCC 27591 / A909 / CDC SS700).